The primary structure comprises 130 residues: Small ribosomal subunit protein uS11c (130 aa).

This sequence belongs to the universal ribosomal protein uS11 family. As to quaternary structure, part of the 30S ribosomal subunit.

The protein localises to the plastid. It localises to the chloroplast. The polypeptide is Small ribosomal subunit protein uS11c (Pyropia yezoensis (Susabi-nori)).